Reading from the N-terminus, the 213-residue chain is Redox-sensing transcriptional repressor Rex (213 aa).

A DNA-binding region (H-T-H motif) is located at residues 17–56 (LYYRIFKRFHSENIEKASSKQIAEAIGIDSATVRRDFSYF). 91 to 96 (GVGNIG) lines the NAD(+) pocket.

It belongs to the transcriptional regulatory Rex family. In terms of assembly, homodimer.

Its subcellular location is the cytoplasm. Functionally, modulates transcription in response to changes in cellular NADH/NAD(+) redox state. The protein is Redox-sensing transcriptional repressor Rex of Streptococcus mutans serotype c (strain ATCC 700610 / UA159).